We begin with the raw amino-acid sequence, 350 residues long: Ketol-acid reductoisomerase (NADP(+)) (350 aa).

Residues valine 4–threonine 187 enclose the KARI N-terminal Rossmann domain. NADP(+) contacts are provided by residues tyrosine 30–glutamine 33, arginine 53, threonine 58, and aspartate 88–glutamine 91. Histidine 113 is a catalytic residue. Glycine 139 serves as a coordination point for NADP(+). The 146-residue stretch at threonine 188–leucine 333 folds into the KARI C-terminal knotted domain. Mg(2+)-binding residues include aspartate 196, glutamate 200, glutamate 232, and glutamate 236. Substrate is bound at residue serine 257.

Belongs to the ketol-acid reductoisomerase family. It depends on Mg(2+) as a cofactor.

The catalysed reaction is (2R)-2,3-dihydroxy-3-methylbutanoate + NADP(+) = (2S)-2-acetolactate + NADPH + H(+). The enzyme catalyses (2R,3R)-2,3-dihydroxy-3-methylpentanoate + NADP(+) = (S)-2-ethyl-2-hydroxy-3-oxobutanoate + NADPH + H(+). It participates in amino-acid biosynthesis; L-isoleucine biosynthesis; L-isoleucine from 2-oxobutanoate: step 2/4. Its pathway is amino-acid biosynthesis; L-valine biosynthesis; L-valine from pyruvate: step 2/4. In terms of biological role, involved in the biosynthesis of branched-chain amino acids (BCAA). Catalyzes an alkyl-migration followed by a ketol-acid reduction of (S)-2-acetolactate (S2AL) to yield (R)-2,3-dihydroxy-isovalerate. In the isomerase reaction, S2AL is rearranged via a Mg-dependent methyl migration to produce 3-hydroxy-3-methyl-2-ketobutyrate (HMKB). In the reductase reaction, this 2-ketoacid undergoes a metal-dependent reduction by NADPH to yield (R)-2,3-dihydroxy-isovalerate. This Xylella fastidiosa (strain Temecula1 / ATCC 700964) protein is Ketol-acid reductoisomerase (NADP(+)).